A 205-amino-acid chain; its full sequence is CASP-like protein 2A1 (205 aa).

Over 1–35 the chain is Cytoplasmic; sequence MMGDKGEKECATASSPIELGCGEGDESGNKSSMRT. A helical membrane pass occupies residues 36–56; the sequence is VETLLRLVPVALCTVSLVVML. At 57 to 77 the chain is on the extracellular side; the sequence is KNSQTNDFGSLSYSDLGAFRY. The chain crosses the membrane as a helical span at residues 78 to 98; that stretch reads LVHANGICAGYSLLSAIFTAM. Residues 99-106 are Cytoplasmic-facing; it reads PRPPTMSR. Residues 107-127 form a helical membrane-spanning segment; sequence AWTFFLLDQVLTYLILAAGAV. Residues 128 to 157 lie on the Extracellular side of the membrane; that stretch reads STEVVYLAYKGDEAVTWSDACSSFGGFCQK. The helical transmembrane segment at 158–178 threads the bilayer; that stretch reads TTASISITFVTVLCYAVLSLI. At 179–205 the chain is on the cytoplasmic side; it reads SSYKLFSKYDAPICFNGKGIEIAAFHS.

This sequence belongs to the Casparian strip membrane proteins (CASP) family. In terms of assembly, homodimer and heterodimers.

Its subcellular location is the cell membrane. This is CASP-like protein 2A1 from Vitis vinifera (Grape).